The sequence spans 332 residues: DNA-directed RNA polymerase subunit alpha (332 aa).

Residues 1–226 (MLIAQRPTLT…ELFGLARELN (226 aa)) form an alpha N-terminal domain (alpha-NTD) region. Residues 243–332 (LSSELSMPIE…GYDEDESTTI (90 aa)) are alpha C-terminal domain (alpha-CTD).

Belongs to the RNA polymerase alpha chain family. In terms of assembly, homodimer. The RNAP catalytic core consists of 2 alpha, 1 beta, 1 beta' and 1 omega subunit. When a sigma factor is associated with the core the holoenzyme is formed, which can initiate transcription.

The enzyme catalyses RNA(n) + a ribonucleoside 5'-triphosphate = RNA(n+1) + diphosphate. Its function is as follows. DNA-dependent RNA polymerase catalyzes the transcription of DNA into RNA using the four ribonucleoside triphosphates as substrates. This chain is DNA-directed RNA polymerase subunit alpha, found in Leifsonia xyli subsp. xyli (strain CTCB07).